The sequence spans 710 residues: MLSFQYPDVYRDETAIQDYHGHKVCDPYAWLEDPDSEQTKAFVEAQNKITVPFLEQCPIRGLYKERMTELYDYPKYSCHFKKGKRYFYFYNTGLQNQRVLYVQDSLEGEARVFLDPNILSDDGTVALRGYAFSEDGEYFAYGLSASGSDWVTIKFMKVDGAKELPDVLERVKFSCMAWTHDGKGMFYNAYPQQDGKSDGTETSTNLHQKLYYHVLGTDQSEDILCAEFPDEPKWMGGAELSDDGRYVLLSIREGCDPVNRLWYCDLQQESNGITGILKWVKLIDNFEGEYDYVTNEGTVFTFKTNRHSPNYRLINIDFTDPEESKWKVLVPEHEKDVLEWVACVRSNFLVLCYLHDVKNTLQLHDLATGALLKIFPLEVGSVVGYSGQKKDTEIFYQFTSFLSPGIIYHCDLTKEELEPRVFREVTVKGIDASDYQTVQIFYPSKDGTKIPMFIVHKKGIKLDGSHPAFLYGYGGFNISITPNYSVSRLIFVRHMGGVLAVANIRGGGEYGETWHKGGILANKQNCFDDFQCAAEYLIKEGYTSPKRLTINGGSNGGLLVATCANQRPDLFGCVIAQVGVMDMLKFHKYTIGHAWTTDYGCSDSKQHFEWLIKYSPLHNVKLPEADDIQYPSMLLLTADHDDRVVPLHSLKFIATLQYIVGRSRKQNNPLLIHVDTKAGHGAGKPTAKVIEEVSDMFAFIARCLNIDWIP.

Position 1 is an N-acetylmethionine (Met1). Position 157 is an N6-acetyllysine (Lys157). Catalysis depends on charge relay system residues Ser554, Asp641, and His680.

It belongs to the peptidase S9A family. In terms of processing, the N-terminus is blocked. In terms of tissue distribution, ubiquitous.

It localises to the cytoplasm. It catalyses the reaction Hydrolysis of Pro-|-Xaa &gt;&gt; Ala-|-Xaa in oligopeptides.. Its function is as follows. Cleaves peptide bonds on the C-terminal side of prolyl residues within peptides that are up to approximately 30 amino acids long. The polypeptide is Prolyl endopeptidase (PREP) (Sus scrofa (Pig)).